The following is a 484-amino-acid chain: MEKSWFNFMFSKGELEYRGELSKAMDSFAPGEKTTISQDRFIYDMDKNFYGWGGRSSYSNNVDLLVSSKDIRNFISDNTFFVRDSNKNSYSIYFDIKKKIFEIDNDFSDLEKFFYSYCSSSYLNNRSKGDNDLHYDSYIKNTKYNCTNHINSCIDSYFRSYICIDSNFLSDSNNYNESYIYNFICSESGKIRESKNYKIRTNRNRSNLISSKDFDITQNYNQLWIQCDNCYGLMYKKVKINVCEQCGHYLKMSSSERIELSIDPGTWNPMDEDMVSADPIKFHSKEEPYKNRIDSAQKTTGLTDAVQTGTGQLNGIPVALGVMDFRFMGGSMGSVVGEKITRLVEYATNQCLPLILVCSSGGARMQEGSLSLMQMAKISSVLCDYQSSKKLFYISILTSPTTGGVTASFGMLGDIIIAEPYAYIAFAGKRVIEQTLKKAVPEGSQAAESLLRKGLLDAIVPRNLLKSVLSELFQLHAFFPLNKN.

Residues 223–484 enclose the CoA carboxyltransferase N-terminal domain; sequence LWIQCDNCYG…LHAFFPLNKN (262 aa). 4 residues coordinate Zn(2+): C227, C230, C243, and C246. The C4-type zinc-finger motif lies at 227-246; that stretch reads CDNCYGLMYKKVKINVCEQC.

The protein belongs to the AccD/PCCB family. In terms of assembly, acetyl-CoA carboxylase is a heterohexamer composed of biotin carboxyl carrier protein, biotin carboxylase and 2 subunits each of ACCase subunit alpha and ACCase plastid-coded subunit beta (accD). Zn(2+) is required as a cofactor.

The protein localises to the plastid. It localises to the chloroplast stroma. It catalyses the reaction N(6)-carboxybiotinyl-L-lysyl-[protein] + acetyl-CoA = N(6)-biotinyl-L-lysyl-[protein] + malonyl-CoA. It functions in the pathway lipid metabolism; malonyl-CoA biosynthesis; malonyl-CoA from acetyl-CoA: step 1/1. Its function is as follows. Component of the acetyl coenzyme A carboxylase (ACC) complex. Biotin carboxylase (BC) catalyzes the carboxylation of biotin on its carrier protein (BCCP) and then the CO(2) group is transferred by the transcarboxylase to acetyl-CoA to form malonyl-CoA. The protein is Acetyl-coenzyme A carboxylase carboxyl transferase subunit beta, chloroplastic of Capsella bursa-pastoris (Shepherd's purse).